The sequence spans 346 residues: Phosphoribosylformylglycinamidine cyclo-ligase (346 aa).

Belongs to the AIR synthase family.

It is found in the cytoplasm. It carries out the reaction 2-formamido-N(1)-(5-O-phospho-beta-D-ribosyl)acetamidine + ATP = 5-amino-1-(5-phospho-beta-D-ribosyl)imidazole + ADP + phosphate + H(+). The protein operates within purine metabolism; IMP biosynthesis via de novo pathway; 5-amino-1-(5-phospho-D-ribosyl)imidazole from N(2)-formyl-N(1)-(5-phospho-D-ribosyl)glycinamide: step 2/2. The protein is Phosphoribosylformylglycinamidine cyclo-ligase of Bacillus velezensis (strain DSM 23117 / BGSC 10A6 / LMG 26770 / FZB42) (Bacillus amyloliquefaciens subsp. plantarum).